The following is a 132-amino-acid chain: AEPEDAIHYRQSALSVMGWQMGPMGAMAQGDIEYDADEFATRANNLAAVAHLPWEGFTEGTLQGDDHGVETDALADIGDDWEGFEERQETFKQEAATLAQMVDDGEEFSALRRQVGAVGKSCKGCHDDFRAE.

6 residues coordinate heme c: Arg10, Gln11, Asp65, Cys122, Cys125, and His126.

Binds 1 heme c group covalently per subunit.

Functionally, cytochrome c' is the most widely occurring bacterial c-type cytochrome. Cytochromes c' are high-spin proteins and the heme has no sixth ligand. Their exact function is not known. The protein is Cytochrome c' of Halomonas halodenitrificans (strain ATCC 12084 / NCIMB 8669) (Paracoccus halodenitrificans).